The following is a 150-amino-acid chain: 3-hydroxyacyl-[acyl-carrier-protein] dehydratase FabZ (150 aa).

Histidine 54 is a catalytic residue.

The protein belongs to the thioester dehydratase family. FabZ subfamily.

It is found in the cytoplasm. It carries out the reaction a (3R)-hydroxyacyl-[ACP] = a (2E)-enoyl-[ACP] + H2O. In terms of biological role, involved in unsaturated fatty acids biosynthesis. Catalyzes the dehydration of short chain beta-hydroxyacyl-ACPs and long chain saturated and unsaturated beta-hydroxyacyl-ACPs. This chain is 3-hydroxyacyl-[acyl-carrier-protein] dehydratase FabZ, found in Vibrio parahaemolyticus serotype O3:K6 (strain RIMD 2210633).